Reading from the N-terminus, the 115-residue chain is MNPLIQSLTEGQLRSDIPNFRPGDTVRVHAKVVEGTRERIQIFEGVVISRKGQGISEMYTVRKISGGIGVERTFPIHTPRVDKIEVIRHGKVRRAKLYYLRALQGKAARIKEIRR.

It belongs to the bacterial ribosomal protein bL19 family.

Functionally, this protein is located at the 30S-50S ribosomal subunit interface and may play a role in the structure and function of the aminoacyl-tRNA binding site. The sequence is that of Large ribosomal subunit protein bL19 from Streptococcus pyogenes serotype M1.